A 299-amino-acid polypeptide reads, in one-letter code: Mitochondrial 2-oxodicarboxylate carrier (299 aa).

Solcar repeat units follow at residues 11 to 100, 107 to 196, and 205 to 294; these read NEAS…YKKL, SPAL…VKNI, and LEFL…TYSW. The next 6 helical transmembrane spans lie at 17 to 37, 62 to 82, 100 to 120, 179 to 199, 211 to 231, and 274 to 290; these read ILAG…LDVV, MIFR…PILA, LLGY…LGSG, HGVF…IIPV, FGIG…FDVA, and IMRL…VYEY.

The protein belongs to the mitochondrial carrier (TC 2.A.29) family.

It localises to the mitochondrion inner membrane. The catalysed reaction is 2-oxoadipate(in) + 2-oxoglutarate(out) = 2-oxoadipate(out) + 2-oxoglutarate(in). It carries out the reaction hexanedioate(in) + 2-oxoglutarate(out) = hexanedioate(out) + 2-oxoglutarate(in). It catalyses the reaction L-2-aminoadipate(in) + 2-oxoglutarate(out) = L-2-aminoadipate(out) + 2-oxoglutarate(in). The enzyme catalyses glutarate(in) + 2-oxoglutarate(out) = glutarate(out) + 2-oxoglutarate(in). The catalysed reaction is 2-oxoheptanedioate(in) + 2-oxoglutarate(out) = 2-oxoheptanedioate(out) + 2-oxoglutarate(in). It carries out the reaction heptanedioate(in) + 2-oxoglutarate(out) = heptanedioate(out) + 2-oxoglutarate(in). It catalyses the reaction citrate(in) + 2-oxoglutarate(out) = citrate(out) + 2-oxoglutarate(in). Transports dicarboxylates across the inner membranes of mitochondria by a counter-exchange mechanism. Can transport 2-oxoadipate (2-oxohexanedioate), 2-oxoglutarate, adipate (hexanedioate), glutarate, and to a lesser extent, pimelate (heptanedioate), 2-oxopimelate (2-oxoheptanedioate), 2-aminoadipate (2-aminohexanedioate), oxaloacetate, and citrate. Plays a central role in catabolism of lysine, hydroxylysine, and tryptophan, by transporting common metabolite intermediates (such as 2-oxoadipate) into the mitochondria, where it is converted into acetyl-CoA and can enter the citric acid (TCA) cycle. In Bos taurus (Bovine), this protein is Mitochondrial 2-oxodicarboxylate carrier (SLC25A21).